The following is a 756-amino-acid chain: LIM domain and actin-binding protein 1 (756 aa).

Position 1 is an N-acetylmethionine (Met-1). Phosphoserine occurs at positions 15 and 55. The span at 44 to 56 (AAEEANMEKRRSN) shows a compositional bias: basic and acidic residues. 2 disordered regions span residues 44-183 (AAEE…SNKI) and 204-377 (QTKI…AVKK). Residues 107 to 118 (EVASSSASGVEA) are compositionally biased toward low complexity. Ser-130 is subject to Phosphoserine. Residues 140–173 (RIKDTEHLKDHSAESKKMENCLAESRHEVGKPET) show a composition bias toward basic and acidic residues. Positions 164-166 (SRH) match the Required for interaction with NPC1L1 motif. Ser-221 is subject to Phosphoserine. Tyr-225 carries the phosphotyrosine modification. Phosphoserine is present on residues Ser-226 and Ser-238. Basic and acidic residues predominate over residues 245–254 (EKSESRRNLE). Ser-259 bears the Phosphoserine mark. Over residues 274–287 (VSKQSSSTNYTNEL) the composition is skewed to polar residues. Basic and acidic residues predominate over residues 294–303 (IKTHKLEQKE). Phosphoserine is present on residues Ser-339, Ser-346, Ser-358, Ser-365, and Ser-370. Positions 384–444 (ETCVECQKTV…KPHFNQLFKS (61 aa)) constitute an LIM zinc-binding domain. Lys-435 carries the post-translational modification N6-succinyllysine. Phosphoserine is present on Ser-486. The tract at residues 489–509 (VEDAPIAKVGVLTASMEAKAS) is required for interaction with MYO5B. Residues 508–726 (ASSQLEKEDK…TTQKQKSQDV (219 aa)) are disordered. Over residues 512–523 (LEKEDKPAETKK) the composition is skewed to basic and acidic residues. The span at 533 to 542 (ELSSSGSALE) shows a compositional bias: low complexity. Residues 552 to 563 (WPPEDEVSKPEA) are compositionally biased toward basic and acidic residues. Residues Ser-597, Ser-600, Ser-605, and Ser-613 each carry the phosphoserine modification. Residues 627 to 637 (AERKQMEKASA) show a composition bias toward basic and acidic residues. The segment covering 638 to 651 (SEKNGSVGKTTWPS) has biased composition (polar residues). Positions 652 to 667 (KESRGGEAAGRSKEVQ) are enriched in basic and acidic residues. Residues 691–721 (LQQQSPLEPKSKNWSSFADNTSAKEFTTQKQ) show a composition bias toward polar residues. A phosphoserine mark is found at Ser-695, Ser-723, and Ser-738.

In terms of assembly, interacts with NPC1L1; bridges NPC1L1 with MYO5B. Interacts with MYO5B; bridges MYO5B with NPC1L1. Interacts with PXN; this complex stabilizes actin dynamics. Interacts with F-actin and G-actin. Interacts with LUZP1 (via C-terminus); both proteins restrict ciliation and may work together to regulate this process. Binds RAB40B (GTP-bound); interaction influences LIMA1 subcellular localization in lamellipodia during cell migration. Phosphorylation of the C-terminal region by MAPK1/MAPK3 reduces its association with F-actin and contributes to actin filament reorganization and enhances cell motility. Post-translationally, ubiquitinated by the ECS(RAB40B) complex leading to its degradation. Widely expressed. Highest levels of isoform 2 are expressed in lung, spleen and small intestine. Isoform 2 is expressed at higher levels than isoform 1 in most tissues except liver, fat and kidney. Isoform 1 and isoform 2 are expressed at low levels in skeletal muscle, heart, stomach and lymph.

The protein resides in the cytoplasm. It localises to the cell junction. It is found in the focal adhesion. Its subcellular location is the cytoskeleton. The protein localises to the stress fiber. The protein resides in the cell membrane. It localises to the cell projection. It is found in the ruffle. Its subcellular location is the lamellipodium. Its function is as follows. Actin-binding protein involved in actin cytoskeleton regulation and dynamics. Increases the number and size of actin stress fibers and inhibits membrane ruffling. Inhibits actin filament depolymerization. Bundles actin filaments, delays filament nucleation and reduces formation of branched filaments. Acts as a negative regulator of primary cilium formation. Plays a role in cholesterol homeostasis. Influences plasma cholesterol levels through regulation of intestinal cholesterol absorption. May act as a scaffold protein by regulating NPC1L1 transportation, an essential protein for cholesterol absorption, to the plasma membrane by recruiting MYO5B to NPC1L1, and thus facilitates cholesterol uptake. This chain is LIM domain and actin-binding protein 1, found in Sus scrofa (Pig).